We begin with the raw amino-acid sequence, 143 residues long: MGIRFILMVNKQGQTRLAQYYEWLTLEERRALEGEIVRKCLARNDQQCSFVEHRNYKIVYRRYASLFFMVGVDDDENELAILEFIHLLVETMDKHFGNVCELDIMFHLEKAHFMLEEMVMNGCIVETSKANILSPIQLMDKAH.

The protein belongs to the adaptor complexes small subunit family. In terms of assembly, adaptor protein complex 4 (AP-4) is a heterotetramer composed of two large adaptins (epsilon-type subunit and beta-type subunit), a medium adaptin (mu-type subunit) and a small adaptin (sigma-type subunit). Interacts with EHD2.

The protein resides in the golgi apparatus. The protein localises to the trans-Golgi network. It is found in the membrane. It localises to the coated pit. Functionally, subunit of novel type of clathrin- or non-clathrin-associated protein coat involved in targeting proteins from the trans-Golgi network (TGN) to the endosomal-lysosomal system. In Arabidopsis thaliana (Mouse-ear cress), this protein is AP-4 complex subunit sigma.